The primary structure comprises 859 residues: Leucine--tRNA ligase (859 aa).

The 'HIGH' region signature appears at 42 to 52 (PYPSGKLHMGH). A 'KMSKS' region motif is present at residues 618-622 (KMSKS). An ATP-binding site is contributed by Lys-621.

Belongs to the class-I aminoacyl-tRNA synthetase family.

It localises to the cytoplasm. It catalyses the reaction tRNA(Leu) + L-leucine + ATP = L-leucyl-tRNA(Leu) + AMP + diphosphate. The chain is Leucine--tRNA ligase from Buchnera aphidicola subsp. Acyrthosiphon pisum (strain APS) (Acyrthosiphon pisum symbiotic bacterium).